A 327-amino-acid polypeptide reads, in one-letter code: Methionyl-tRNA formyltransferase (327 aa).

A (6S)-5,6,7,8-tetrahydrofolate-binding site is contributed by 121–124; the sequence is SLLP.

The protein belongs to the Fmt family.

The catalysed reaction is L-methionyl-tRNA(fMet) + (6R)-10-formyltetrahydrofolate = N-formyl-L-methionyl-tRNA(fMet) + (6S)-5,6,7,8-tetrahydrofolate + H(+). In terms of biological role, attaches a formyl group to the free amino group of methionyl-tRNA(fMet). The formyl group appears to play a dual role in the initiator identity of N-formylmethionyl-tRNA by promoting its recognition by IF2 and preventing the misappropriation of this tRNA by the elongation apparatus. This is Methionyl-tRNA formyltransferase from Burkholderia ambifaria (strain ATCC BAA-244 / DSM 16087 / CCUG 44356 / LMG 19182 / AMMD) (Burkholderia cepacia (strain AMMD)).